Consider the following 620-residue polypeptide: 1-deoxy-D-xylulose-5-phosphate synthase (620 aa).

Residues His80 and 121–123 (GHS) contribute to the thiamine diphosphate site. Residue Asp152 coordinates Mg(2+). Thiamine diphosphate-binding positions include 153–154 (GA), Asn181, Tyr288, and Glu370. Asn181 contributes to the Mg(2+) binding site.

This sequence belongs to the transketolase family. DXPS subfamily. Homodimer. Mg(2+) is required as a cofactor. Thiamine diphosphate serves as cofactor.

The catalysed reaction is D-glyceraldehyde 3-phosphate + pyruvate + H(+) = 1-deoxy-D-xylulose 5-phosphate + CO2. It functions in the pathway metabolic intermediate biosynthesis; 1-deoxy-D-xylulose 5-phosphate biosynthesis; 1-deoxy-D-xylulose 5-phosphate from D-glyceraldehyde 3-phosphate and pyruvate: step 1/1. Its function is as follows. Catalyzes the acyloin condensation reaction between C atoms 2 and 3 of pyruvate and glyceraldehyde 3-phosphate to yield 1-deoxy-D-xylulose-5-phosphate (DXP). The sequence is that of 1-deoxy-D-xylulose-5-phosphate synthase from Shigella sonnei (strain Ss046).